The primary structure comprises 772 residues: Acetamidase regulatory protein (772 aa).

Over residues 1-16 (MSSTAQKNSLSPTGNG) the composition is skewed to polar residues. The disordered stretch occupies residues 1-23 (MSSTAQKNSLSPTGNGVTKRKSG). The zn(2)-C6 fungal-type DNA-binding region spans 26-59 (ACVHCHRRKVRCDARIVGLPCSNCRSSGKTDCRI). 3 disordered regions span residues 78–99 (RCRPPSTSEHVPEASPPSTISE), 114–148 (AAAPPASVAPNVQSKAQHLHSNSYSQTSPQAQECH), and 627–690 (ATSE…QTAV). Residues 114–123 (AAAPPASVAP) are compositionally biased toward low complexity. 2 stretches are compositionally biased toward polar residues: residues 124-144 (NVQSKAQHLHSNSYSQTSPQA) and 634-658 (PFSSTQDQPQAQALDQNKNQHQHSS). Residues 671–686 (LLPSYDSPTPDSTSLP) show a composition bias toward low complexity.

The protein localises to the nucleus. Functionally, positively regulates the expression of genes involved in the catabolism of certain amides, omega amino acids, and lactams. This is Acetamidase regulatory protein (amdR) from Aspergillus fumigatus (strain ATCC MYA-4609 / CBS 101355 / FGSC A1100 / Af293) (Neosartorya fumigata).